A 497-amino-acid polypeptide reads, in one-letter code: Peptidoglycan endopeptidase RipA (497 aa).

Positions methionine 1 to alanine 39 are cleaved as a signal peptide. Basic and acidic residues predominate over residues alanine 177–glutamate 192. 2 disordered regions span residues alanine 177–alanine 198 and alanine 253–tryptophan 297. The segment covering alanine 255–glutamine 273 has biased composition (pro residues). In terms of domain architecture, NlpC/P60 spans arginine 365–tyrosine 497. The active-site Nucleophile is cysteine 408. The active-site Proton acceptor is the histidine 457. Glutamate 469 is an active-site residue.

The protein belongs to the peptidase C40 family. Monomer.

The protein localises to the secreted. Its function is as follows. Peptidoglycan endopeptidase that cleaves the bond between D-glutamate and meso-diaminopimelate. Binds and degrades high-molecular weight peptidoglycan. Required for normal separation of daughter cells after cell division and for cell wall integrity. The polypeptide is Peptidoglycan endopeptidase RipA (ripA) (Mycolicibacterium smegmatis (strain ATCC 700084 / mc(2)155) (Mycobacterium smegmatis)).